The sequence spans 973 residues: Ras-related protein Rab-44 (973 aa).

Residues 1 to 21 are compositionally biased toward basic residues; it reads MEKGKGVSRKGRKLASSRRRQ. Residues 1-42 are disordered; the sequence is MEKGKGVSRKGRKLASSRRRQAREPADGQDAPVAAEAESWPS. Positions 77 to 111 constitute an EF-hand domain; the sequence is GGEEPQMIFDWVDVESRGHLSLEEFSSGLKNVFGS. Residues 112-140 are disordered; it reads SPGTHRLRTKRSLPSQRESVTSTLPVPEE. Positions 123–135 are enriched in polar residues; the sequence is SLPSQRESVTSTL. The stretch at 219-310 forms a coiled coil; sequence LYKVRQLYEE…ERDLAGQLEE (92 aa). Disordered stretches follow at residues 319–368, 421–481, 493–708, and 724–779; these read RGHL…FGNN, FSQE…GSFL, GTVE…GLAV, and EAQP…GKPQ. Pro residues predominate over residues 428–440; the sequence is DPDPGPRGSPEVP. The span at 445-457 shows a compositional bias: basic and acidic residues; the sequence is KDGKGVEDPKGQD. The span at 513 to 524 shows a compositional bias: low complexity; sequence GLSSSPQSPAGS. Composition is skewed to basic and acidic residues over residues 548 to 559, 598 to 608, and 654 to 663; these read SLEREVMAEDLK, HLARQESHAKG, and SESHGLEARS. The segment covering 665 to 680 has biased composition (polar residues); that stretch reads ESPQQDDPLPNTSQPP. Basic and acidic residues predominate over residues 750–766; sequence AESRPEDPRTDLQEAER. Residues 792–799, 840–844, and 898–901 each bind GTP; these read GDSNVGKT, DTAGQ, and NKMD. 2 S-geranylgeranyl cysteine lipidation sites follow: C971 and C972.

The protein belongs to the small GTPase superfamily. Rab family.

The protein localises to the cell membrane. This chain is Ras-related protein Rab-44 (Rab44), found in Mus musculus (Mouse).